A 213-amino-acid polypeptide reads, in one-letter code: Glycerol-3-phosphate acyltransferase (213 aa).

Helical transmembrane passes span 2–22, 52–74, 81–100, 112–132, 143–163, and 164–184; these read ITIVLLILAYLLGSIPSGLWI, AGMATFVIDFFKGTLATLLPIIF, PLIFGLLAVIGHTFPIFAGF, VIFGFAPIFCLYLAIIFFGAL, VTASIAAVIGVLLFPLFGFIL, and SNYDSLFITIILALASLIIIR.

Belongs to the PlsY family. As to quaternary structure, probably interacts with PlsX.

The protein resides in the cell membrane. The enzyme catalyses an acyl phosphate + sn-glycerol 3-phosphate = a 1-acyl-sn-glycero-3-phosphate + phosphate. It participates in lipid metabolism; phospholipid metabolism. Functionally, catalyzes the transfer of an acyl group from acyl-phosphate (acyl-PO(4)) to glycerol-3-phosphate (G3P) to form lysophosphatidic acid (LPA). This enzyme utilizes acyl-phosphate as fatty acyl donor, but not acyl-CoA or acyl-ACP. This chain is Glycerol-3-phosphate acyltransferase, found in Streptococcus pneumoniae (strain Hungary19A-6).